The sequence spans 1649 residues: DNA-directed RNA polymerase subunit beta' (1649 aa).

Residues Cys-62, Cys-64, Cys-77, and Cys-80 each contribute to the Zn(2+) site. Positions 746, 748, and 750 each coordinate Mg(2+). Zn(2+) contacts are provided by Cys-1077, Cys-1268, Cys-1275, and Cys-1278.

Belongs to the RNA polymerase beta' chain family. In terms of assembly, the RNAP catalytic core consists of 2 alpha, 1 beta, 1 beta' and 1 omega subunit. When a sigma factor is associated with the core the holoenzyme is formed, which can initiate transcription. Mg(2+) is required as a cofactor. It depends on Zn(2+) as a cofactor.

The catalysed reaction is RNA(n) + a ribonucleoside 5'-triphosphate = RNA(n+1) + diphosphate. In terms of biological role, DNA-dependent RNA polymerase catalyzes the transcription of DNA into RNA using the four ribonucleoside triphosphates as substrates. The chain is DNA-directed RNA polymerase subunit beta' from Thermosipho africanus (strain TCF52B).